Here is a 224-residue protein sequence, read N- to C-terminus: UPF0758 protein PBPRA0202 (224 aa).

The 123-residue stretch at 102 to 224 folds into the MPN domain; that stretch reads VLTSPQHTRH…IVSFSEQGWL (123 aa). The Zn(2+) site is built by H173, H175, and D186. The short motif at 173-186 is the JAMM motif element; it reads HNHPSGVAEPSQSD.

This sequence belongs to the UPF0758 family.

The chain is UPF0758 protein PBPRA0202 from Photobacterium profundum (strain SS9).